Consider the following 29-residue polypeptide: Potassium channel toxin alpha-KTx 20.1 (29 aa).

Intrachain disulfides connect cysteine 2–cysteine 20, cysteine 7–cysteine 24, and cysteine 11–cysteine 26.

This sequence belongs to the short scorpion toxin superfamily. Potassium channel inhibitor family. Alpha-KTx 20 subfamily. Expressed by the venom gland.

It localises to the secreted. Its function is as follows. Reduces potassium currents through Kv1.2/KCNA2 and Kv1.3/KCNA3 voltage-gated potassium channels. This Tityus trivittatus (Argentinean scorpion) protein is Potassium channel toxin alpha-KTx 20.1.